A 134-amino-acid polypeptide reads, in one-letter code: Protein NrdI (134 aa).

The protein belongs to the NrdI family.

In terms of biological role, probably involved in ribonucleotide reductase function. This Chromohalobacter salexigens (strain ATCC BAA-138 / DSM 3043 / CIP 106854 / NCIMB 13768 / 1H11) protein is Protein NrdI.